Reading from the N-terminus, the 192-residue chain is Transcription termination/antitermination protein NusG (192 aa).

It belongs to the NusG family.

Participates in transcription elongation, termination and antitermination. The chain is Transcription termination/antitermination protein NusG from Rickettsia prowazekii (strain Madrid E).